Reading from the N-terminus, the 250-residue chain is 2-C-methyl-D-erythritol 4-phosphate cytidylyltransferase (250 aa).

Belongs to the IspD/TarI cytidylyltransferase family. IspD subfamily.

It carries out the reaction 2-C-methyl-D-erythritol 4-phosphate + CTP + H(+) = 4-CDP-2-C-methyl-D-erythritol + diphosphate. It functions in the pathway isoprenoid biosynthesis; isopentenyl diphosphate biosynthesis via DXP pathway; isopentenyl diphosphate from 1-deoxy-D-xylulose 5-phosphate: step 2/6. Functionally, catalyzes the formation of 4-diphosphocytidyl-2-C-methyl-D-erythritol from CTP and 2-C-methyl-D-erythritol 4-phosphate (MEP). The protein is 2-C-methyl-D-erythritol 4-phosphate cytidylyltransferase of Streptomyces avermitilis (strain ATCC 31267 / DSM 46492 / JCM 5070 / NBRC 14893 / NCIMB 12804 / NRRL 8165 / MA-4680).